The sequence spans 693 residues: MAALGVQSINWQTAFNRQAHHTDKFSSQELILRRGQNFQVLMIMNKGLGSNERLEFIVSTGPYPSESAMTKAVFPLSNGSSGGWSAVLQASNGNTLTISISSPASAPIGRYTMALQIFSQGGISSVKLGTFILLFNPWLNVDSVFMGNHAEREEYVQEDAGIIFVGSTNRIGMIGWNFGQFEEDILSICLSILDRSLNFRRDAATDVASRNDPKYVGRVLSAMINSNDDNGVLAGNWSGTYTGGRDPRSWNGSVEILKNWKKSGFSPVRYGQCWVFAGTLNTALRSLGIPSRVITNFNSAHDTDRNLSVDVYYDPMGNPLDKGSDSVWNFHVWNEGWFVRSDLGPSYGGWQVLDATPQERSQGVFQCGPASVIGVREGDVQLNFDMPFIFAEVNADRITWLYDNTTGKQWKNSVNSHTIGRYISTKAVGSNARMDVTDKYKYPEGSDQERQVFQKALGKLKPNTPFAATSSMGLETEEQEPSIIGKLKVAGMLAVGKEVNLVLLLKNLSRDTKTVTVNMTAWTIIYNGTLVHEVWKDSATMSLDPEEEAEHPIKISYAQYEKYLKSDNMIRITAVCKVPDESEVVVERDIILDNPTLTLEVLNEARVRKPVNVQMLFSNPLDEPVRDCVLMVEGSGLLLGNLKIDVPTLGPKEGSRVRFDILPSRSGTKQLLADFSCNKFPAIKAMLSIDVAE.

Residue Ala2 is modified to N-acetylalanine. The residue at position 111 (Tyr111) is a Phosphotyrosine. Thr112 carries the phosphothreonine modification. Ca(2+) contacts are provided by Ala222, Asn225, Asn227, Asp228, and Asn230. Residue Cys273 is part of the active site. Ca(2+)-binding residues include Asp302, Asp304, Asn306, Ser308, and Asp325. Residues His331 and Asp354 contribute to the active site. Residues Asn394, Ser416, Glu444, and Glu449 each contribute to the Ca(2+) site.

It belongs to the transglutaminase superfamily. Transglutaminase family. As to quaternary structure, consists of two polypeptide chains, which are synthesized as a precursor form of a single polypeptide. It depends on Ca(2+) as a cofactor. Activated by proteolytic processing. In vitro activation is commonly achieved by cleavage with dispase, a neutral bacterial protease. Dispase cleavage site was proposed to lie between Ser-470 and Ser-471 or between Pro-465 and Phe-466. Physiological activation may be catalyzed by CTSL and, to a lesser extent, by CTSS, but not by CTSB, CTSD nor CTSV.

It is found in the cytoplasm. It catalyses the reaction L-glutaminyl-[protein] + L-lysyl-[protein] = [protein]-L-lysyl-N(6)-5-L-glutamyl-[protein] + NH4(+). Its function is as follows. Catalyzes the calcium-dependent formation of isopeptide cross-links between glutamine and lysine residues in various proteins, as well as the conjugation of polyamines to proteins. Involved in the formation of the cornified envelope (CE), a specialized component consisting of covalent cross-links of proteins beneath the plasma membrane of terminally differentiated keratinocytes. Catalyzes small proline-rich proteins (SPRR1 and SPRR2) and LOR cross-linking to form small interchain oligomers, which are further cross-linked by TGM1 onto the growing CE scaffold. In hair follicles, involved in cross-linking structural proteins to hardening the inner root sheath. This is Protein-glutamine gamma-glutamyltransferase E (TGM3) from Homo sapiens (Human).